A 256-amino-acid chain; its full sequence is Probable enoyl-CoA hydratase echA14 (256 aa).

The disordered stretch occupies residues 235 to 256 (GPQAKSVQSPEFAARLAAAQHR).

The protein belongs to the enoyl-CoA hydratase/isomerase family.

The catalysed reaction is a (3S)-3-hydroxyacyl-CoA = a (2E)-enoyl-CoA + H2O. The enzyme catalyses a 4-saturated-(3S)-3-hydroxyacyl-CoA = a (3E)-enoyl-CoA + H2O. Functionally, could possibly oxidize fatty acids using specific components. The polypeptide is Probable enoyl-CoA hydratase echA14 (echA14) (Mycobacterium tuberculosis (strain CDC 1551 / Oshkosh)).